A 200-amino-acid polypeptide reads, in one-letter code: MSKGAVLIISGPSGCGKSTLTKSLIESIPNVYFSISTTTRPMREGETDGVHYHFVSKEHFLQDIHNNVFLEWAEVHTNFYGTSLKPVQQALEQDKIVLFDVDVQGHHSIKEYFGDFAKSVFITTKNKDILRERLISRQTDDLQTIEFRLIQAHNEMQHIHNFDYLIINDDITTAKEAMVAIARSLKYQQIERLSKIIQKW.

In terms of domain architecture, Guanylate kinase-like spans Gly-4 to Arg-183. Gly-11–Ser-18 lines the ATP pocket.

Belongs to the guanylate kinase family.

Its subcellular location is the cytoplasm. It catalyses the reaction GMP + ATP = GDP + ADP. Functionally, essential for recycling GMP and indirectly, cGMP. This is Guanylate kinase from Helicobacter hepaticus (strain ATCC 51449 / 3B1).